A 258-amino-acid polypeptide reads, in one-letter code: Trans-aconitate 2-methyltransferase (258 aa).

Belongs to the methyltransferase superfamily. Tam family.

It is found in the cytoplasm. The enzyme catalyses trans-aconitate + S-adenosyl-L-methionine = (E)-3-(methoxycarbonyl)pent-2-enedioate + S-adenosyl-L-homocysteine. In terms of biological role, catalyzes the S-adenosylmethionine monomethyl esterification of trans-aconitate. This Deinococcus radiodurans (strain ATCC 13939 / DSM 20539 / JCM 16871 / CCUG 27074 / LMG 4051 / NBRC 15346 / NCIMB 9279 / VKM B-1422 / R1) protein is Trans-aconitate 2-methyltransferase.